The primary structure comprises 151 residues: Putative pre-16S rRNA nuclease (151 aa).

The protein belongs to the YqgF nuclease family.

It is found in the cytoplasm. In terms of biological role, could be a nuclease involved in processing of the 5'-end of pre-16S rRNA. This Methylococcus capsulatus (strain ATCC 33009 / NCIMB 11132 / Bath) protein is Putative pre-16S rRNA nuclease.